The following is a 129-amino-acid chain: Lysozyme C (129 aa).

The region spanning 1–129 (KIYTRCELAA…VSKWIKDCKL (129 aa)) is the C-type lysozyme domain. Intrachain disulfides connect C6-C127, C30-C115, C64-C80, and C76-C94. Residues E35 and D52 contribute to the active site.

It belongs to the glycosyl hydrolase 22 family. As to quaternary structure, monomer.

It localises to the secreted. It carries out the reaction Hydrolysis of (1-&gt;4)-beta-linkages between N-acetylmuramic acid and N-acetyl-D-glucosamine residues in a peptidoglycan and between N-acetyl-D-glucosamine residues in chitodextrins.. Functionally, lysozymes have primarily a bacteriolytic function; those in tissues and body fluids are associated with the monocyte-macrophage system and enhance the activity of immunoagents. This chain is Lysozyme C (LYZ), found in Crax fasciolata (Bare-faced curassow).